We begin with the raw amino-acid sequence, 255 residues long: Small ribosomal subunit protein eS1 (255 aa).

Ala2 bears the N-acetylalanine; partial mark.

Belongs to the eukaryotic ribosomal protein eS1 family. Component of the small ribosomal subunit. Mature ribosomes consist of a small (40S) and a large (60S) subunit. The 40S subunit contains about 33 different proteins and 1 molecule of RNA (18S). The 60S subunit contains about 49 different proteins and 3 molecules of RNA (25S, 5.8S and 5S).

Its subcellular location is the cytoplasm. This chain is Small ribosomal subunit protein eS1, found in Arthroderma otae (strain ATCC MYA-4605 / CBS 113480) (Microsporum canis).